Reading from the N-terminus, the 416-residue chain is Doublesex- and mab-3-related transcription factor A2 (416 aa).

The DM DNA-binding region spans 25–72 (CARCRNHGVVSALKGHKRYCRWKDCMCAKCTLIAERQRVMAAQVALRR). Residues 131–154 (FSKGQLSGPTTPQQAAGKSASAES) are compositionally biased toward polar residues. Positions 131-226 (FSKGQLSGPT…PSPSSAASRH (96 aa)) are disordered. Over residues 197–207 (GSVSSIGSDSG) the composition is skewed to low complexity. The DMA domain occupies 227–262 (MNAIDILTRVFPSHKRSILELVLQGCGKDVVQAIEQ).

This sequence belongs to the DMRT family.

The protein resides in the nucleus. In terms of biological role, may be involved in sexual development. This is Doublesex- and mab-3-related transcription factor A2 (dmrta2) from Takifugu rubripes (Japanese pufferfish).